The following is a 399-amino-acid chain: STOREKEEPER protein (399 aa).

2 disordered regions span residues 1–160 (MAPK…RSLW) and 250–301 (GISN…EEQQ). Acidic residues predominate over residues 20-54 (EEQELVEESQEEEEQQSREEEGEEESGEETEEDEE). A compositionally biased stretch (polar residues) spans 69 to 79 (KLVQTPQKPQF). 2 stretches are compositionally biased toward low complexity: residues 80–100 (SSES…SGNS) and 116–125 (AAKAATPSKP). Basic and acidic residues-rich tracts occupy residues 143–152 (KIAEEEEKKS) and 270–299 (KTVE…KEEE).

It belongs to the GeBP family. Expressed in tubers and in leaves treated with sucrose.

The protein resides in the nucleus. Its function is as follows. May act as a transcriptional regulator. Binds specifically to the B-box motif, a promoter element that is required for the tuber-specific and sucrose inducible expression of the patatin gene. The polypeptide is STOREKEEPER protein (Solanum tuberosum (Potato)).